A 263-amino-acid chain; its full sequence is 5'-nucleotidase SurE (263 aa).

A divalent metal cation-binding residues include aspartate 10, aspartate 11, serine 41, and asparagine 95.

This sequence belongs to the SurE nucleotidase family. A divalent metal cation serves as cofactor.

The protein resides in the cytoplasm. The catalysed reaction is a ribonucleoside 5'-phosphate + H2O = a ribonucleoside + phosphate. Nucleotidase that shows phosphatase activity on nucleoside 5'-monophosphates. In Methanoculleus marisnigri (strain ATCC 35101 / DSM 1498 / JR1), this protein is 5'-nucleotidase SurE.